Consider the following 554-residue polypeptide: Phosphomethylpyrimidine synthase (554 aa).

Residues Asn-188, Met-217, Tyr-246, His-282, 302–304 (SRG), 343–346 (DGLR), and Glu-382 contribute to the substrate site. Residue His-386 coordinates Zn(2+). Tyr-409 is a binding site for substrate. Residue His-450 coordinates Zn(2+). The [4Fe-4S] cluster site is built by Cys-530, Cys-533, and Cys-538.

The protein belongs to the ThiC family. In terms of assembly, homodimer. [4Fe-4S] cluster serves as cofactor.

The catalysed reaction is 5-amino-1-(5-phospho-beta-D-ribosyl)imidazole + S-adenosyl-L-methionine = 4-amino-2-methyl-5-(phosphooxymethyl)pyrimidine + CO + 5'-deoxyadenosine + formate + L-methionine + 3 H(+). Its pathway is cofactor biosynthesis; thiamine diphosphate biosynthesis. In terms of biological role, catalyzes the synthesis of the hydroxymethylpyrimidine phosphate (HMP-P) moiety of thiamine from aminoimidazole ribotide (AIR) in a radical S-adenosyl-L-methionine (SAM)-dependent reaction. This chain is Phosphomethylpyrimidine synthase, found in Coxiella burnetii (strain RSA 493 / Nine Mile phase I).